A 111-amino-acid chain; its full sequence is 4'-hydroxy-3'-methoxypropiophenone carrier protein ppsC (111 aa).

The interval 1 to 21 is disordered; it reads MSAQVMRPGTPQHEGQEFLSG.

The protein operates within secondary metabolite biosynthesis. In terms of biological role, 4'-hydroxy-3'-methoxypropiophenone carrier protein; part of the gene cluster that mediates the biosynthesis of 2,4'-dihydroxy-3'-methoxypropiophenone. The first step of the pathway is the conversion of acetate into acetyl-CoA by the acyl-CoA ligase ppsA. Acetyl-CoA is then used as a starter unit by the polyketide synthase ppsB and condensed with 4 malonyl-CoA unit to produce the pentaketide backbone. During polyketide extension, the polykedite chain is probably reduced and dehydrated by the KR and PT domains, respectively. O-methylation seems to be catalyzed by an unknown methyltransferase rather than by the CMeT domain of ppsB. Two hydroxylations and one further decarboxylation step catalyzed by yet unknown enzymes are then required to yield 4'-hydroxy-3'-methoxypropiophenone. PpsC functions as a carrier protein to transport 4'-hydroxy-3'-methoxypropiophenone to a specific cell compartment in which 4'-hydroxy-3'-methoxypropiophenone is hydroxylated to 2,4'-dihydroxy-3'-methoxypropiophenone by a still to be identified enzyme. This is 4'-hydroxy-3'-methoxypropiophenone carrier protein ppsC from Aspergillus oryzae (strain ATCC 42149 / RIB 40) (Yellow koji mold).